A 501-amino-acid chain; its full sequence is Aldehyde dehydrogenase, cytosolic 1 (501 aa).

Serine 2 is modified (N-acetylserine). N6-acetyllysine occurs at positions 91 and 128. 246–251 contacts NAD(+); that stretch reads GSTEVG. Lysine 252 carries the N6-acetyllysine modification. The active-site Proton acceptor is the glutamate 269. The active-site Nucleophile is cysteine 303. 3 positions are modified to N6-acetyllysine: lysine 353, lysine 367, and lysine 410. Serine 413 carries the post-translational modification Phosphoserine. Lysine 419 and lysine 435 each carry N6-acetyllysine.

The protein belongs to the aldehyde dehydrogenase family. Homotetramer. Highest level in liver, high level in lung, low level in kidney and testis.

The protein localises to the cytoplasm. It catalyses the reaction an aldehyde + NAD(+) + H2O = a carboxylate + NADH + 2 H(+). The protein operates within alcohol metabolism; ethanol degradation; acetate from ethanol: step 2/2. In terms of biological role, can oxidize benzaldehyde, propionaldehyde and acetaldehyde. No detectable activity with retinal. In Mus musculus (Mouse), this protein is Aldehyde dehydrogenase, cytosolic 1.